The sequence spans 610 residues: UvrABC system protein C (610 aa).

The 79-residue stretch at 16–94 folds into the GIY-YIG domain; sequence SQPGVYRMYD…IKLYQPRYNV (79 aa). The region spanning 204–239 is the UVR domain; it reads DQVLTQLIARMEKASQDLAFEEAARIRDQIQAVRRV.

It belongs to the UvrC family. As to quaternary structure, interacts with UvrB in an incision complex.

It is found in the cytoplasm. In terms of biological role, the UvrABC repair system catalyzes the recognition and processing of DNA lesions. UvrC both incises the 5' and 3' sides of the lesion. The N-terminal half is responsible for the 3' incision and the C-terminal half is responsible for the 5' incision. In Salmonella schwarzengrund (strain CVM19633), this protein is UvrABC system protein C.